Consider the following 628-residue polypeptide: Chaperone protein HtpG (628 aa).

The a; substrate-binding stretch occupies residues 1 to 337 (MSEKKYTFET…SADLPLNVSR (337 aa)). The b stretch occupies residues 338–554 (EILQHNKVID…DYGMSLHMQK (217 aa)). The tract at residues 555-628 (MMEEAGQGFM…FVKLVNKYIR (74 aa)) is c.

This sequence belongs to the heat shock protein 90 family. As to quaternary structure, homodimer.

The protein localises to the cytoplasm. Its function is as follows. Molecular chaperone. Has ATPase activity. This Francisella tularensis subsp. novicida (strain U112) protein is Chaperone protein HtpG.